A 593-amino-acid polypeptide reads, in one-letter code: Aspartate--tRNA ligase (593 aa).

Glutamate 180 is an L-aspartate binding site. An aspartate region spans residues 204–207; sequence QIFK. Position 226 (arginine 226) interacts with L-aspartate. ATP contacts are provided by residues 226–228 and glutamine 235; that span reads RDE. Histidine 453 contributes to the L-aspartate binding site. Residue glutamate 487 coordinates ATP. Residue arginine 494 participates in L-aspartate binding. 539–542 is a binding site for ATP; the sequence is GLDR.

Belongs to the class-II aminoacyl-tRNA synthetase family. Type 1 subfamily. Homodimer.

Its subcellular location is the cytoplasm. It carries out the reaction tRNA(Asp) + L-aspartate + ATP = L-aspartyl-tRNA(Asp) + AMP + diphosphate. Its function is as follows. Catalyzes the attachment of L-aspartate to tRNA(Asp) in a two-step reaction: L-aspartate is first activated by ATP to form Asp-AMP and then transferred to the acceptor end of tRNA(Asp). This is Aspartate--tRNA ligase from Clostridium botulinum (strain Loch Maree / Type A3).